Here is a 186-residue protein sequence, read N- to C-terminus: Ribosome-recycling factor (186 aa).

It belongs to the RRF family.

It is found in the cytoplasm. In terms of biological role, responsible for the release of ribosomes from messenger RNA at the termination of protein biosynthesis. May increase the efficiency of translation by recycling ribosomes from one round of translation to another. In Rickettsia massiliae (strain Mtu5), this protein is Ribosome-recycling factor.